The chain runs to 176 residues: Large ribosomal subunit protein uL6 (176 aa).

The protein belongs to the universal ribosomal protein uL6 family. As to quaternary structure, part of the 50S ribosomal subunit.

In terms of biological role, this protein binds to the 23S rRNA, and is important in its secondary structure. It is located near the subunit interface in the base of the L7/L12 stalk, and near the tRNA binding site of the peptidyltransferase center. The polypeptide is Large ribosomal subunit protein uL6 (Lacticaseibacillus paracasei (strain ATCC 334 / BCRC 17002 / CCUG 31169 / CIP 107868 / KCTC 3260 / NRRL B-441) (Lactobacillus paracasei)).